The following is a 388-amino-acid chain: Succinate--CoA ligase [ADP-forming] subunit beta (388 aa).

In terms of domain architecture, ATP-grasp spans Lys9–Gln244. ATP contacts are provided by residues Lys46, Gly53–Gly55, Glu99, Thr102, and Glu107. Residues Asn199 and Asp213 each coordinate Mg(2+). Substrate is bound by residues Asn264 and Gly321–Val323.

It belongs to the succinate/malate CoA ligase beta subunit family. Heterotetramer of two alpha and two beta subunits. Requires Mg(2+) as cofactor.

It catalyses the reaction succinate + ATP + CoA = succinyl-CoA + ADP + phosphate. It carries out the reaction GTP + succinate + CoA = succinyl-CoA + GDP + phosphate. It participates in carbohydrate metabolism; tricarboxylic acid cycle; succinate from succinyl-CoA (ligase route): step 1/1. In terms of biological role, succinyl-CoA synthetase functions in the citric acid cycle (TCA), coupling the hydrolysis of succinyl-CoA to the synthesis of either ATP or GTP and thus represents the only step of substrate-level phosphorylation in the TCA. The beta subunit provides nucleotide specificity of the enzyme and binds the substrate succinate, while the binding sites for coenzyme A and phosphate are found in the alpha subunit. This Escherichia coli O139:H28 (strain E24377A / ETEC) protein is Succinate--CoA ligase [ADP-forming] subunit beta.